Reading from the N-terminus, the 492-residue chain is 3-octaprenyl-4-hydroxybenzoate carboxy-lyase (492 aa).

Residue Asn175 participates in Mn(2+) binding. Residues 178–180 (IYR), 192–194 (RWL), and 197–198 (RG) contribute to the prenylated FMN site. Glu241 contributes to the Mn(2+) binding site. Residue Asp290 is the Proton donor of the active site.

Belongs to the UbiD family. In terms of assembly, homohexamer. Prenylated FMN serves as cofactor. The cofactor is Mn(2+).

The protein resides in the cell membrane. It carries out the reaction a 4-hydroxy-3-(all-trans-polyprenyl)benzoate + H(+) = a 2-(all-trans-polyprenyl)phenol + CO2. Its pathway is cofactor biosynthesis; ubiquinone biosynthesis. Catalyzes the decarboxylation of 3-octaprenyl-4-hydroxy benzoate to 2-octaprenylphenol, an intermediate step in ubiquinone biosynthesis. This chain is 3-octaprenyl-4-hydroxybenzoate carboxy-lyase, found in Salmonella choleraesuis (strain SC-B67).